We begin with the raw amino-acid sequence, 252 residues long: Phosphoribosylformylglycinamidine synthase subunit PurQ (252 aa).

The 232-residue stretch at 6 to 237 (VGVVVFPGSN…FAHLAGTKRS (232 aa)) folds into the Glutamine amidotransferase type-1 domain. Cys89 acts as the Nucleophile in catalysis. Residues His206 and Glu208 contribute to the active site.

In terms of assembly, part of the FGAM synthase complex composed of 1 PurL, 1 PurQ and 2 PurS subunits.

It localises to the cytoplasm. It catalyses the reaction N(2)-formyl-N(1)-(5-phospho-beta-D-ribosyl)glycinamide + L-glutamine + ATP + H2O = 2-formamido-N(1)-(5-O-phospho-beta-D-ribosyl)acetamidine + L-glutamate + ADP + phosphate + H(+). It carries out the reaction L-glutamine + H2O = L-glutamate + NH4(+). It functions in the pathway purine metabolism; IMP biosynthesis via de novo pathway; 5-amino-1-(5-phospho-D-ribosyl)imidazole from N(2)-formyl-N(1)-(5-phospho-D-ribosyl)glycinamide: step 1/2. Functionally, part of the phosphoribosylformylglycinamidine synthase complex involved in the purines biosynthetic pathway. Catalyzes the ATP-dependent conversion of formylglycinamide ribonucleotide (FGAR) and glutamine to yield formylglycinamidine ribonucleotide (FGAM) and glutamate. The FGAM synthase complex is composed of three subunits. PurQ produces an ammonia molecule by converting glutamine to glutamate. PurL transfers the ammonia molecule to FGAR to form FGAM in an ATP-dependent manner. PurS interacts with PurQ and PurL and is thought to assist in the transfer of the ammonia molecule from PurQ to PurL. This is Phosphoribosylformylglycinamidine synthase subunit PurQ from Chlorobaculum parvum (strain DSM 263 / NCIMB 8327) (Chlorobium vibrioforme subsp. thiosulfatophilum).